The following is a 663-amino-acid chain: Transforming growth factor beta activator LRRC32 (663 aa).

Positions 1–17 (MSHQILLLLAMLTLGLA) are cleaved as a signal peptide. At 18–628 (ISQRREQVPC…CEKGGLKNVN (611 aa)) the chain is on the extracellular side. The region spanning 22 to 49 (REQVPCRTVNKEALCHGLGLLQVPSVLS) is the LRRNT domain. LRR repeat units follow at residues 49–72 (SLDI…PLGF), 73–96 (YTAL…VFQA), 98–123 (PYLE…GLGR), 125–148 (PLLV…LLGE), 149–172 (TPRL…TFWG), 174–196 (PAVE…AFEA), 197–220 (LPHL…SLQQ), 222–241 (QVLD…PEPQ), 243–267 (QFQL…VFPR), and 269–287 (IYLN…LPRG). Asn-204 carries N-linked (GlcNAc...) asparagine glycosylation. Residues Asn-272, Asn-305, and Asn-309 are each glycosylated (N-linked (GlcNAc...) asparagine). Residues 291–311 (LHAPSEGWSASPLSNPSRNAS) form a disordered region. Residues 301–311 (SPLSNPSRNAS) are compositionally biased toward polar residues. LRR repeat units lie at residues 315 to 338 (LSQL…FLEH), 340 to 362 (TSLR…QVDS), 363 to 386 (LPCL…TKVL), 387 to 409 (GSLQ…TFAS), 411 to 433 (ASLQ…AEPG), 443 to 466 (IPTL…SFLH), 468 to 489 (PLTE…ALVG), 491 to 514 (EASL…LPCF), 515 to 539 (LRLK…AVSL), 541 to 559 (VLDL…AMGG), and 561 to 584 (ETSL…WLAA). N-linked (GlcNAc...) asparagine glycosylation occurs at Asn-346. Asn-546 carries N-linked (GlcNAc...) asparagine glycosylation. The 50-residue stretch at 572–621 (NPLSCCGNGWLAAQLHQGRVDVDATQDLICRFGSQEELSLSLVRPEDCEK) folds into the LRRCT domain. A helical membrane pass occupies residues 629–649 (LILLLSFTLVSAIVLTTLATI). Topologically, residues 650-663 (CFLRRQKLSQQYKA) are cytoplasmic.

The protein belongs to the LRRC32/LRRC33 family. As to quaternary structure, interacts with TGFB1; associates via disulfide bonds with the Latency-associated peptide chain (LAP) regulatory chain of TGFB1, leading to regulate activation of TGF-beta-1. Interacts with TGFB2. Interacts with TGFB3; associates via disulfide bonds with the Latency-associated peptide chain (LAP) regulatory chain of TGFB3, leading to regulate activation of TGF-beta-3. Interacts with LAPTM4B; decreases TGFB1 production in regulatory T-cells. As to expression, present in medial edge epithelial cells at 14.5 dpc (at protein level).

Its subcellular location is the cell membrane. It is found in the cell surface. In terms of biological role, key regulator of transforming growth factor beta (TGFB1, TGFB2 and TGFB3) that controls TGF-beta activation by maintaining it in a latent state during storage in extracellular space. Associates specifically via disulfide bonds with the Latency-associated peptide (LAP), which is the regulatory chain of TGF-beta, and regulates integrin-dependent activation of TGF-beta. Able to outcompete LTBP1 for binding to LAP regulatory chain of TGF-beta. Controls activation of TGF-beta-1 (TGFB1) on the surface of activated regulatory T-cells (Tregs). Required for epithelial fusion during palate development by regulating activation of TGF-beta-3 (TGFB3). The polypeptide is Transforming growth factor beta activator LRRC32 (Mus musculus (Mouse)).